We begin with the raw amino-acid sequence, 92 residues long: FMRFamide-like neuropeptides 5 (92 aa).

Residues 1–41 (MSSRSTTIAFLFIATLLVFQCVSAQSSAEDADYLEKYQRIA) constitute a propeptide that is removed on maturation. Phe51 and Phe61 each carry phenylalanine amide. Residues 64-82 (SRNTWEDGYASPSVNELYV) constitute a propeptide that is removed on maturation. Position 91 is a phenylalanine amide (Phe91).

Belongs to the FARP (FMRFamide related peptide) family. Each flp gene is expressed in a distinct set of neurons. Flp-5 is expressed in the ASE sensory neurons, the 14 and M4 cholinergic pharyngeal motoneurons, and the PVT and RMG neurons. It is weakly expressed in the PB and 12 neurons. Also expressed in pharyngeal muscle.

Its subcellular location is the secreted. FMRFamides and FMRFamide-like peptides are neuropeptides. GAKFIRF-amide has an excitatory effect on dissected pharyngeal myogenic muscle system. This Caenorhabditis elegans protein is FMRFamide-like neuropeptides 5.